The primary structure comprises 111 residues: uncharacterized protein (111 aa).

A helical membrane pass occupies residues 81–101; sequence YFFLLFYVSFPHIFLGLFFFI.

The protein resides in the membrane. This is an uncharacterized protein from Schizosaccharomyces pombe (strain 972 / ATCC 24843) (Fission yeast).